A 164-amino-acid polypeptide reads, in one-letter code: Protein-export protein SecB (164 aa).

The protein belongs to the SecB family. As to quaternary structure, homotetramer, a dimer of dimers. One homotetramer interacts with 1 SecA dimer.

Its subcellular location is the cytoplasm. In terms of biological role, one of the proteins required for the normal export of preproteins out of the cell cytoplasm. It is a molecular chaperone that binds to a subset of precursor proteins, maintaining them in a translocation-competent state. It also specifically binds to its receptor SecA. This Zymomonas mobilis subsp. mobilis (strain ATCC 31821 / ZM4 / CP4) protein is Protein-export protein SecB.